The following is a 172-amino-acid chain: Cytochrome c oxidase subunit 4 isoform 2, mitochondrial (172 aa).

A mitochondrion-targeting transit peptide spans 1–34; the sequence is MFSRAARSLVMRTGLRTRGTGTHSPGDAAGSQRR. Residues 13–22 are compositionally biased toward low complexity; it reads TGLRTRGTGT. The disordered stretch occupies residues 13–32; sequence TGLRTRGTGTHSPGDAAGSQ. The Mitochondrial matrix portion of the chain corresponds to 35–101; that stretch reads MTPYVDCYAQ…TFAEMNHRSN (67 aa). Residues 102 to 127 form a helical membrane-spanning segment; it reads EWKTVMGCVFFFIGFTALVIWWQRVY. At 128–172 the chain is on the mitochondrial intermembrane side; sequence VFPKKVVTLTEERKAQQLQRLLDMKSNPIQGLAAHWDYEKKEWKK.

The protein belongs to the cytochrome c oxidase IV family. In terms of assembly, component of the cytochrome c oxidase (complex IV, CIV), a multisubunit enzyme composed of 14 subunits. The complex is composed of a catalytic core of 3 subunits MT-CO1, MT-CO2 and MT-CO3, encoded in the mitochondrial DNA, and 11 supernumerary subunits COX4I, COX5A, COX5B, COX6A, COX6B, COX6C, COX7A, COX7B, COX7C, COX8 and NDUFA4, which are encoded in the nuclear genome. The complex exists as a monomer or a dimer and forms supercomplexes (SCs) in the inner mitochondrial membrane with NADH-ubiquinone oxidoreductase (complex I, CI) and ubiquinol-cytochrome c oxidoreductase (cytochrome b-c1 complex, complex III, CIII), resulting in different assemblies (supercomplex SCI(1)III(2)IV(1) and megacomplex MCI(2)III(2)IV(2)).

It localises to the mitochondrion inner membrane. The protein operates within energy metabolism; oxidative phosphorylation. Functionally, component of the cytochrome c oxidase, the last enzyme in the mitochondrial electron transport chain which drives oxidative phosphorylation. The respiratory chain contains 3 multisubunit complexes succinate dehydrogenase (complex II, CII), ubiquinol-cytochrome c oxidoreductase (cytochrome b-c1 complex, complex III, CIII) and cytochrome c oxidase (complex IV, CIV), that cooperate to transfer electrons derived from NADH and succinate to molecular oxygen, creating an electrochemical gradient over the inner membrane that drives transmembrane transport and the ATP synthase. Cytochrome c oxidase is the component of the respiratory chain that catalyzes the reduction of oxygen to water. Electrons originating from reduced cytochrome c in the intermembrane space (IMS) are transferred via the dinuclear copper A center (CU(A)) of subunit 2 and heme A of subunit 1 to the active site in subunit 1, a binuclear center (BNC) formed by heme A3 and copper B (CU(B)). The BNC reduces molecular oxygen to 2 water molecules using 4 electrons from cytochrome c in the IMS and 4 protons from the mitochondrial matrix. In Mus musculus (Mouse), this protein is Cytochrome c oxidase subunit 4 isoform 2, mitochondrial (Cox4i2).